The following is a 126-amino-acid chain: uncharacterized protein (126 aa).

Residues Met-1–Val-28 lie on the Cytoplasmic side of the membrane. The helical transmembrane segment at Val-29–Ile-49 threads the bilayer. At Asp-50–Ser-75 the chain is on the extracellular side. A helical membrane pass occupies residues Val-76–Ile-96. Residue Gly-97 is a topological domain, cytoplasmic. The helical transmembrane segment at His-98–Ala-118 threads the bilayer. The Extracellular segment spans residues Glu-119 to Thr-126.

It is found in the membrane. This is an uncharacterized protein from Saccharomyces cerevisiae (strain ATCC 204508 / S288c) (Baker's yeast).